Reading from the N-terminus, the 599-residue chain is BICD family-like cargo adapter 1 (599 aa).

The interval 1–27 (MELPISFLSDSSRPAASSERGDQAALG) is disordered. Positions 76 to 80 (AARLG) match the CC1 box motif. Residues 80-341 (GKALLERNQD…WEAHCQVRSL (262 aa)) are a coiled coil. A disordered region spans residues 352–375 (DSAVSTDSSMDESSETSSAKDVPA). The stretch at 405-536 (EDDGLEEQIK…LEAWQDDMHR (132 aa)) forms a coiled coil.

The protein belongs to the BICDR family. Part of a tripartite complex with dynein and dynactin, acts an adapter linking the dynein motor complex and dynactin. Interacts with KIF1C. Interacts with RAB6A and RAB6B; interaction is specific to Rab6.

It is found in the cytoplasm. The protein localises to the cytoskeleton. The protein resides in the microtubule organizing center. It localises to the centrosome. Its function is as follows. Acts as an adapter protein linking the dynein motor complex to various cargos and converts dynein from a non-processive to a highly processive motor in the presence of dynactin. Facilitates the interaction between dynein and dynactin and activates dynein processivity (the ability to move along a microtubule for a long distance without falling off the track). Predominantly recruits 2 dyneins, which increases both the force and speed of the microtubule motor. Component of secretory vesicle machinery in developing neurons that acts as a regulator of neurite outgrowth. Regulates the secretory vesicle transport by controlling the accumulation of Rab6-containing secretory vesicles in the pericentrosomal region restricting anterograde secretory transport during the early phase of neuronal differentiation, thereby inhibiting neuritogenesis. This Xenopus tropicalis (Western clawed frog) protein is BICD family-like cargo adapter 1 (bicdl1).